The following is a 623-amino-acid chain: Pentatricopeptide repeat-containing protein At5g15340, mitochondrial (623 aa).

The N-terminal 16 residues, Met-1–Cys-16, are a transit peptide targeting the mitochondrion. PPR repeat units follow at residues Arg-42–Ser-72, Asp-75–Ile-109, Asp-110–Thr-144, Ser-145–Ser-179, Trp-180–Arg-206, Asn-207–Arg-237, Asn-243–Met-277, Asp-285–Thr-319, Trp-320–Glu-346, Asp-350–Pro-384, and Lys-385–Val-419. The segment at Val-420–Asn-495 is type E motif. Residues Asp-496 to Arg-526 form a type E(+) motif region. Residues Ser-527–Trp-623 form a type DYW motif region.

Belongs to the PPR family. PCMP-H subfamily.

Its subcellular location is the mitochondrion. This is Pentatricopeptide repeat-containing protein At5g15340, mitochondrial (PCMP-H91) from Arabidopsis thaliana (Mouse-ear cress).